A 115-amino-acid polypeptide reads, in one-letter code: Large ribosomal subunit protein bL19 (115 aa).

It belongs to the bacterial ribosomal protein bL19 family.

Functionally, this protein is located at the 30S-50S ribosomal subunit interface and may play a role in the structure and function of the aminoacyl-tRNA binding site. The polypeptide is Large ribosomal subunit protein bL19 (Alkaliphilus oremlandii (strain OhILAs) (Clostridium oremlandii (strain OhILAs))).